Reading from the N-terminus, the 487-residue chain is MLRAPGCLLRTSVAPAAALAAALLSSLARCSLLEPRDPVASSLSPYFGTKTRYEDVNPVLLSGPEAPWRDPELLEGTCTPVQLVALIRHGTRYPTVKQIRKLRQLHGLLQARGSRDGGASSTGSRDLGAALADWPLWYADWMDGQLVEKGRQDMRQLALRLASLFPALFSRENYGRLRLITSSKHRCMDSSAAFLQGLWQHYHPGLPPPDVADMEFGPPTVNDKLMRFFDHCEKFLTEVEKNATALYHVEAFKTGPEMQNILKKVAATLQVPVNDLNADLIQVAFFTCSFDLAIKGVKSPWCDVFDIDDAKVLEYLNDLKQYWKRGYGYTINSRSSCTLFQDIFQHLDKAVEQKQRSQPISSPVILQFGHAETLLPLLSLMGYFKDKEPLTAYNYKKQMHRKFRSGLIVPYASNLIFVLYHCENAKTPKEQFRVQMLLNEKVLPLAYSQETVSFYEDLKNHYKDILQSCQTSEECELARANSTSDEL.

The N-terminal stretch at 1–30 is a signal peptide; sequence MLRAPGCLLRTSVAPAAALAAALLSSLARC. Residue histidine 89 is part of the active site. 2 N-linked (GlcNAc...) asparagine glycosylation sites follow: asparagine 242 and asparagine 481. A Prevents secretion from ER motif is present at residues 484 to 487; sequence SDEL.

It belongs to the histidine acid phosphatase family. MINPP1 subfamily. N-glycosylated. Widely expressed with highest levels in kidney, liver, cerebellum and placenta.

Its subcellular location is the endoplasmic reticulum lumen. The protein localises to the secreted. It is found in the cell membrane. It carries out the reaction 1D-myo-inositol hexakisphosphate + H2O = 1D-myo-inositol 1,2,4,5,6-pentakisphosphate + phosphate. It catalyses the reaction 1D-myo-inositol 1,2,4,5,6-pentakisphosphate + H2O = 1D-myo-inositol 1,2,5,6-tetrakisphosphate + phosphate. The catalysed reaction is 1D-myo-inositol 1,2,5,6-tetrakisphosphate + H2O = 1D-myo-inositol 1,2,6-trisphosphate + phosphate. The enzyme catalyses 1D-myo-inositol 1,2,6-trisphosphate + H2O = 1D-myo-inositol 1,2-bisphosphate + phosphate. It carries out the reaction 1D-myo-inositol 1,2-bisphosphate + H2O = 1D-myo-inositol 2-phosphate + phosphate. It catalyses the reaction 1D-myo-inositol hexakisphosphate + H2O = 1D-myo-inositol 1,2,3,5,6-pentakisphosphate + phosphate. The catalysed reaction is 1D-myo-inositol 1,2,3,5,6-pentakisphosphate + H2O = 1D-myo-inositol 1,2,3,6-tetrakisphosphate + phosphate. The enzyme catalyses 1D-myo-inositol 1,2,3,6-tetrakisphosphate + H2O = 1D-myo-inositol 1,2,3-trisphosphate + phosphate. It carries out the reaction 1D-myo-inositol 1,2,3-trisphosphate + H2O = 1D-myo-inositol 2,3-bisphosphate + phosphate. It catalyses the reaction 1D-myo-inositol 2,3-bisphosphate + H2O = 1D-myo-inositol 2-phosphate + phosphate. The catalysed reaction is 1D-myo-inositol 1,3,4,5,6-pentakisphosphate + H2O = 1D-myo-inositol 1,4,5,6-tetrakisphosphate + phosphate. The enzyme catalyses 1D-myo-inositol 1,4,5,6-tetrakisphosphate + H2O = 1D-myo-inositol 1,4,5-trisphosphate + phosphate. It carries out the reaction (2R)-2,3-bisphosphoglycerate + H2O = (2R)-2-phosphoglycerate + phosphate. Functionally, multiple inositol polyphosphate phosphatase that hydrolyzes 1D-myo-inositol 1,3,4,5,6-pentakisphosphate (InsP5[2OH]) and 1D-myo-inositol hexakisphosphate (InsP6) to a range of less phosphorylated inositol phosphates. This regulates the availability of these various small molecule second messengers and metal chelators which control many aspects of cell physiology. Has a weak in vitro activity towards 1D-myo-inositol 1,4,5-trisphosphate which is unlikely to be physiologically relevant. By regulating intracellular inositol polyphosphates pools, which act as metal chelators, it may control the availability of intracellular calcium and iron, which are important for proper neuronal development and homeostasis. May have a dual substrate specificity, and function as a 2,3-bisphosphoglycerate 3-phosphatase hydrolyzing 2,3-bisphosphoglycerate to 2-phosphoglycerate. 2,3-bisphosphoglycerate (BPG) is formed as part of the Rapoport-Luebering glycolytic bypass and is a regulator of systemic oxygen homeostasis as the major allosteric effector of hemoglobin. The sequence is that of Multiple inositol polyphosphate phosphatase 1 from Homo sapiens (Human).